Reading from the N-terminus, the 131-residue chain is Glycine cleavage system H protein (131 aa).

The Lipoyl-binding domain occupies 24 to 106; it reads RAIVGVSDHA…YGEGWIMVIE (83 aa). At lysine 65 the chain carries N6-lipoyllysine.

It belongs to the GcvH family. The glycine cleavage system is composed of four proteins: P, T, L and H. (R)-lipoate serves as cofactor.

The glycine cleavage system catalyzes the degradation of glycine. The H protein shuttles the methylamine group of glycine from the P protein to the T protein. The chain is Glycine cleavage system H protein from Xylella fastidiosa (strain Temecula1 / ATCC 700964).